We begin with the raw amino-acid sequence, 216 residues long: Somatotropin (216 aa).

The first 25 residues, 1 to 25 (MAPGSWFSPLFITVITLGLQWPQEA), serve as a signal peptide directing secretion. His46 lines the Zn(2+) pocket. A disulfide bridge connects residues Cys78 and Cys189. Glu198 is a Zn(2+) binding site. A disulfide bridge links Cys206 with Cys214.

Belongs to the somatotropin/prolactin family.

Its subcellular location is the secreted. Functionally, growth hormone plays an important role in growth control. The sequence is that of Somatotropin (GH) from Anas platyrhynchos (Mallard).